The sequence spans 189 residues: GTP cyclohydrolase 1 (189 aa).

Zn(2+) is bound by residues C79, H82, and C151.

This sequence belongs to the GTP cyclohydrolase I family. As to quaternary structure, toroid-shaped homodecamer, composed of two pentamers of five dimers.

The enzyme catalyses GTP + H2O = 7,8-dihydroneopterin 3'-triphosphate + formate + H(+). The protein operates within cofactor biosynthesis; 7,8-dihydroneopterin triphosphate biosynthesis; 7,8-dihydroneopterin triphosphate from GTP: step 1/1. The sequence is that of GTP cyclohydrolase 1 from Lactiplantibacillus plantarum (strain ATCC BAA-793 / NCIMB 8826 / WCFS1) (Lactobacillus plantarum).